Consider the following 342-residue polypeptide: Phosphate acyltransferase (342 aa).

It belongs to the PlsX family. In terms of assembly, homodimer. Probably interacts with PlsY.

It is found in the cytoplasm. It carries out the reaction a fatty acyl-[ACP] + phosphate = an acyl phosphate + holo-[ACP]. The protein operates within lipid metabolism; phospholipid metabolism. Functionally, catalyzes the reversible formation of acyl-phosphate (acyl-PO(4)) from acyl-[acyl-carrier-protein] (acyl-ACP). This enzyme utilizes acyl-ACP as fatty acyl donor, but not acyl-CoA. This Blochmanniella pennsylvanica (strain BPEN) protein is Phosphate acyltransferase.